Consider the following 122-residue polypeptide: Cofilin-5 (122 aa).

The ADF-H domain occupies 3-122 (SRIIEIDPNC…VKDLIQLSNL (120 aa)).

This sequence belongs to the actin-binding proteins ADF family.

It is found in the cytoplasm. The protein localises to the cytoskeleton. Controls actin polymerization and depolymerization. This Dictyostelium discoideum (Social amoeba) protein is Cofilin-5 (cofF).